The following is a 226-amino-acid chain: Cytidylate kinase (226 aa).

10 to 18 (GPASSGKST) is a binding site for ATP.

The protein belongs to the cytidylate kinase family. Type 1 subfamily.

Its subcellular location is the cytoplasm. It catalyses the reaction CMP + ATP = CDP + ADP. It carries out the reaction dCMP + ATP = dCDP + ADP. The polypeptide is Cytidylate kinase (Streptococcus thermophilus (strain CNRZ 1066)).